The chain runs to 540 residues: Signal peptide peptidase-like 2 (540 aa).

The signal sequence occupies residues 1 to 27 (MDSLRFLRILLLSSSILLLSLRSTVTA). The Lumenal segment spans residues 28-196 (GDIVHQDNLA…PRRPAVDVAE (169 aa)). An N-linked (GlcNAc...) asparagine glycan is attached at N83. One can recognise a PA domain in the interval 95 to 173 (SCTPLKNKLS…QDAGASLQKM (79 aa)). An N-linked (GlcNAc...) asparagine glycan is attached at N176. The helical transmembrane segment at 197–217 (VFLWLMAIGTILCASYWSAWS) threads the bilayer. At 218 to 248 (AREAAIEHDKLLKDAIDEIPNTNDGGSGVVE) the chain is on the cytoplasmic side. A helical membrane pass occupies residues 249 to 269 (INSISAIFFVVLASGFLVILY). The Lumenal segment spans residues 270–278 (KLMSYWFVE). The chain crosses the membrane as a helical span at residues 279–299 (LLVVVFCIGGVEGLQTCLVAL). At 300–319 (LSRWFQRAADTYVKVPFLGP) the chain is on the cytoplasmic side. The helical transmembrane segment at 320-340 (ISYLTLAVSPFCIVFAVLWAV) threads the bilayer. Topologically, residues 341–345 (YRVHS) are lumenal. The helical transmembrane segment at 346–366 (FAWIGQDVLGIALIITVLQIV) threads the bilayer. At 367–370 (HVPN) the chain is on the cytoplasmic side. The helical transmembrane segment at 371–391 (LKVGTVLLSCAFLYDIFWVFV) threads the bilayer. Residue D385 is part of the active site. Over 392–429 (SKKLFHESVMIVVARGDKSGEDGIPMLLKIPRMFDPWG) the chain is Lumenal. Residues 430–450 (GYSIIGFGDILLPGLLIAFAL) traverse the membrane as a helical segment. D438 is a catalytic residue. Topologically, residues 451 to 462 (RYDWLANKTLRT) are cytoplasmic. Residues 463-483 (GYFIWAMVAYGLGLLITYVAL) traverse the membrane as a helical segment. Residues 484–488 (NLMDG) lie on the Lumenal side of the membrane. A helical membrane pass occupies residues 489-509 (HGQPALLYIVPFTLGTMLTLA). The PAL signature appears at 492 to 494 (PAL). At 510–540 (RKRDDLWILWTKGEPERACPHHVRLEQCSEK) the chain is on the cytoplasmic side.

Belongs to the peptidase A22B family. In terms of processing, glycosylated. Ubiquitous.

The protein resides in the endosome membrane. Its function is as follows. Intramembrane-cleaving aspartic protease (I-CLiP) that cleaves type II membrane signal peptides in the hydrophobic plane of the membrane. This chain is Signal peptide peptidase-like 2 (SPPL2), found in Arabidopsis thaliana (Mouse-ear cress).